Consider the following 549-residue polypeptide: Chaperonin GroEL (549 aa).

ATP-binding positions include 29-32 (TLGP), lysine 50, 86-90 (DGTTT), glycine 413, 479-481 (NAA), and aspartate 496. Residues 522-549 (VSDKPEKPQQGGQGGGGMGGGDMGGMDF) are disordered. Residues 532–549 (GGQGGGGMGGGDMGGMDF) show a composition bias toward gly residues.

Belongs to the chaperonin (HSP60) family. In terms of assembly, forms a cylinder of 14 subunits composed of two heptameric rings stacked back-to-back. Interacts with the co-chaperonin GroES.

It localises to the cytoplasm. The enzyme catalyses ATP + H2O + a folded polypeptide = ADP + phosphate + an unfolded polypeptide.. Functionally, together with its co-chaperonin GroES, plays an essential role in assisting protein folding. The GroEL-GroES system forms a nano-cage that allows encapsulation of the non-native substrate proteins and provides a physical environment optimized to promote and accelerate protein folding. The protein is Chaperonin GroEL of Deinococcus deserti (strain DSM 17065 / CIP 109153 / LMG 22923 / VCD115).